The following is a 357-amino-acid chain: Guanine nucleotide-binding protein alpha-1 subunit (357 aa).

Gly-2 carries N-myristoyl glycine lipidation. A lipid anchor (S-palmitoyl cysteine) is attached at Cys-4. Positions Asn-32–Tyr-357 constitute a G-alpha domain. Positions Lys-35–Thr-48 are G1 motif. GTP is bound by residues Glu-43, Ser-44, Gly-45, Lys-46, Ser-47, Thr-48, Asp-151, Leu-176, Thr-182, Gly-204, Asn-270, Lys-271, Asp-273, and Ala-329. Ser-47 contributes to the Mg(2+) binding site. The segment at Asp-174 to Thr-182 is G2 motif. Thr-182 lines the Mg(2+) pocket. The segment at Phe-197 to Arg-206 is G3 motif. The tract at residues Ile-266–Asp-273 is G4 motif. Residues Thr-327–Thr-332 form a G5 motif region.

Belongs to the G-alpha family. G proteins are composed of 3 units; alpha, beta and gamma. The alpha chain contains the guanine nucleotide binding site. Mg(2+) serves as cofactor.

Guanine nucleotide-binding proteins (G proteins) are involved as modulators or transducers in various transmembrane signaling systems. This chain is Guanine nucleotide-binding protein alpha-1 subunit (gpa-1), found in Caenorhabditis elegans.